We begin with the raw amino-acid sequence, 1267 residues long: DNA-directed RNA polymerase subunit beta'' (1267 aa).

Residues cysteine 222, cysteine 290, cysteine 297, and cysteine 300 each contribute to the Zn(2+) site.

This sequence belongs to the RNA polymerase beta' chain family. RpoC2 subfamily. In plastids the minimal PEP RNA polymerase catalytic core is composed of four subunits: alpha, beta, beta', and beta''. When a (nuclear-encoded) sigma factor is associated with the core the holoenzyme is formed, which can initiate transcription. It depends on Zn(2+) as a cofactor.

Its subcellular location is the plastid. It is found in the chloroplast. It catalyses the reaction RNA(n) + a ribonucleoside 5'-triphosphate = RNA(n+1) + diphosphate. Functionally, DNA-dependent RNA polymerase catalyzes the transcription of DNA into RNA using the four ribonucleoside triphosphates as substrates. The sequence is that of DNA-directed RNA polymerase subunit beta'' from Emiliania huxleyi (Coccolithophore).